Consider the following 188-residue polypeptide: Phosphatidylcholine-sterol acyltransferase (188 aa).

A glycan (N-linked (GlcNAc...) asparagine) is linked at Asn20. The active-site Charge relay system is His169.

The protein belongs to the AB hydrolase superfamily. Lipase family. Detected in blood plasma (at protein level).

It is found in the secreted. The enzyme catalyses a sterol + a 1,2-diacyl-sn-glycero-3-phosphocholine = a sterol ester + a 1-acyl-sn-glycero-3-phosphocholine. It carries out the reaction a 1-O-alkyl-2-acetyl-sn-glycero-3-phosphocholine + H2O = a 1-O-alkyl-sn-glycero-3-phosphocholine + acetate + H(+). The catalysed reaction is a 1-hexadecanoyl-2-acyl-sn-glycero-3-phosphocholine + (24S)-hydroxycholesterol = (24S)-24-hydroxycholesterol ester + 1-hexadecanoyl-sn-glycero-3-phosphocholine. It catalyses the reaction (24S)-hydroxycholesterol + 1-hexadecanoyl-2-(9Z,12Z-octadecadienoyl)-sn-glycero-3-phosphocholine = (24S)-hydroxycholesterol 3-linoleoate + 1-hexadecanoyl-sn-glycero-3-phosphocholine. The enzyme catalyses 1-hexadecanoyl-2-(5Z,8Z,11Z,14Z-eicosatetraenoyl)-sn-glycero-3-phosphocholine + cholesterol = cholesteryl (5Z,8Z,11Z,14Z)-eicosatetraenoate + 1-hexadecanoyl-sn-glycero-3-phosphocholine. It carries out the reaction 1-hexadecanoyl-2-(9Z-octadecenoyl)-sn-glycero-3-phosphocholine + cholesterol = cholesteryl (9Z-octadecenoate) + 1-hexadecanoyl-sn-glycero-3-phosphocholine. The catalysed reaction is 1-hexadecanoyl-2-(8Z,11Z,14Z-eicosatrienoyl)-sn-glycero-3-phosphocholine + cholesterol = cholesteryl (8Z,11Z,14Z)-eicosatrienoate + 1-hexadecanoyl-sn-glycero-3-phosphocholine. It catalyses the reaction 1-hexadecanoyl-2-(5Z,8Z,11Z-eicosatrienoyl)-sn-glycero-3-phosphocholine + cholesterol = cholesteryl (5Z,8Z,11Z)-eicosatrienoate + 1-hexadecanoyl-sn-glycero-3-phosphocholine. The enzyme catalyses 1-hexadecanoyl-2-(5Z,8Z,11Z,14Z,17Z-eicosapentaenoyl)-sn-glycero-3-phosphocholine + cholesterol = (5Z,8Z,11Z,14Z,17Z-eicosapentaenoyl)-cholesterol + 1-hexadecanoyl-sn-glycero-3-phosphocholine. It carries out the reaction 1-hexadecanoyl-2-(9Z,12Z-octadecadienoyl)-sn-glycero-3-phosphocholine + cholesterol = cholesteryl (9Z,12Z)-octadecadienoate + 1-hexadecanoyl-sn-glycero-3-phosphocholine. The catalysed reaction is 1-hexadecanoyl-2-(6Z,9Z,12Z-octadecatrienoyl)-sn-glycero-3-phosphocholine + cholesterol = (6Z,9Z,12Z-octadecatrienoyl)-cholesterol + 1-hexadecanoyl-sn-glycero-3-phosphocholine. It catalyses the reaction 1-hexadecanoyl-2-(11Z,14Z,17Z-eicosatrienoyl)-sn-glycero-3-phosphocholine + cholesterol = (11Z,14Z,17Z-eicosatrienoyl)-cholesterol + 1-hexadecanoyl-sn-glycero-3-phosphocholine. The enzyme catalyses 1-hexadecanoyl-2-(9Z,12Z,15Z-octadecatrienoyl)-sn-glycero-3-phosphocholine + cholesterol = (9Z,12Z,15Z-octadecatrienoyl)-cholesterol + 1-hexadecanoyl-sn-glycero-3-phosphocholine. It carries out the reaction 1-hexadecanoyl-2-(9Z,12Z-octadecadienoyl)-sn-glycero-3-phosphocholine + H2O = (9Z,12Z)-octadecadienoate + 1-hexadecanoyl-sn-glycero-3-phosphocholine + H(+). The catalysed reaction is 1-hexadecanoyl-2-(5Z,8Z,11Z,14Z-eicosatetraenoyl)-sn-glycero-3-phosphocholine + H2O = 1-hexadecanoyl-sn-glycero-3-phosphocholine + (5Z,8Z,11Z,14Z)-eicosatetraenoate + H(+). It catalyses the reaction a 1-O-alkyl-2-acetyl-sn-glycero-3-phosphocholine + 1-hexadecanoyl-sn-glycero-3-phosphocholine = 1-hexadecanoyl-2-acetyl-sn-glycero-3-phosphocholine + a 1-O-alkyl-sn-glycero-3-phosphocholine. Functionally, central enzyme in the extracellular metabolism of plasma lipoproteins. Synthesized mainly in the liver and secreted into plasma where it converts cholesterol and phosphatidylcholines (lecithins) to cholesteryl esters and lysophosphatidylcholines on the surface of high and low density lipoproteins (HDLs and LDLs). The cholesterol ester is then transported back to the liver. Also produced in the brain by primary astrocytes, and esterifies free cholesterol on nascent APOE-containing lipoproteins secreted from glia and influences cerebral spinal fluid (CSF) APOE- and APOA1 levels. Together with APOE and the cholesterol transporter ABCA1, plays a key role in the maturation of glial-derived, nascent lipoproteins. Required for remodeling high-density lipoprotein particles into their spherical forms. Has a preference for plasma 16:0-18:2 or 18:O-18:2 phosphatidylcholines. Catalyzes the hydrolysis of 1-O-alkyl-2-acetyl-sn-glycero-3-phosphocholine (platelet-activating factor or PAF) to 1-O-alkyl-sn-glycero-3-phosphocholine (lyso-PAF). Also catalyzes the transfer of the acetate group from PAF to 1-hexadecanoyl-sn-glycero-3-phosphocholine forming lyso-PAF. Catalyzes the esterification of (24S)-hydroxycholesterol (24(S)OH-C), also known as cerebrosterol to produce 24(S)OH-C monoesters. The sequence is that of Phosphatidylcholine-sterol acyltransferase (LCAT) from Sus scrofa (Pig).